The following is a 147-amino-acid chain: Large ribosomal subunit protein uL13 (147 aa).

It belongs to the universal ribosomal protein uL13 family. As to quaternary structure, part of the 50S ribosomal subunit.

In terms of biological role, this protein is one of the early assembly proteins of the 50S ribosomal subunit, although it is not seen to bind rRNA by itself. It is important during the early stages of 50S assembly. The sequence is that of Large ribosomal subunit protein uL13 from Mycolicibacterium gilvum (strain PYR-GCK) (Mycobacterium gilvum (strain PYR-GCK)).